Consider the following 920-residue polypeptide: Protein O-mannosyl-transferase TMTC3 (920 aa).

Topologically, residues 1–14 (MLEGKMADINFKEV) are cytoplasmic. The chain crosses the membrane as a helical span at residues 15–35 (TLIVSVVAACYWNSLFCGFVF). At 36 to 94 (DDVSAILDNKDLHPSTPLKTLFQNDFWGTPMSEERSHKSYRPLTVLTFRLNYLLSELKP) the chain is on the extracellular side. A helical membrane pass occupies residues 95-115 (MSYHLLNTVFHAVVSVIFLKV). The Cytoplasmic segment spans residues 116–125 (CRLFLDKRSS). Helical transmembrane passes span 126–144 (MIAA…AVTG) and 145–163 (VVGR…AFLS). Residues 164–171 (YTKSKGPD) lie on the Cytoplasmic side of the membrane. A helical membrane pass occupies residues 172–192 (NSIVWTPIVLTVFLVAVATLC). Residues 193-198 (KEQGIT) are Extracellular-facing. A helical membrane pass occupies residues 199 to 219 (VVGICCVYEVFVAQGYTLPML). The Cytoplasmic portion of the chain corresponds to 220 to 236 (CTVAGQFLRGKGSIPLS). Residues 237 to 257 (MLQTLVKLIVLMLSTLLLVVV) traverse the membrane as a helical segment. At 258–325 (RVQVIQSQLP…LIESFLDVRN (68 aa)) the chain is on the extracellular side. Residues 326–346 (LATFAFFCFLGALGIFSLRYP) form a helical membrane-spanning segment. Residues 347-358 (GDSSKTVLMALC) lie on the Cytoplasmic side of the membrane. Residues 359-379 (LMALPFIPASNLFFPVGFVVA) form a helical membrane-spanning segment. Residues 380–381 (ER) lie on the Extracellular side of the membrane. Residues 382 to 402 (VLYVPSMGFCILVAHGWQKIS) form a helical membrane-spanning segment. At 403-409 (NKSVLKK) the chain is on the cytoplasmic side. Residues 410 to 428 (LSWVCLSMVILTHALKTLH) traverse the membrane as a helical segment. At 429–920 (RNWDWESEYT…EEIERILNGE (492 aa)) the chain is on the extracellular side. TPR repeat units lie at residues 451-484 (AKLW…QPDD), 485-518 (IGAH…MPQI), 534-567 (NVYI…RPDF), 568-601 (KQAY…DRNN), 602-635 (ADLW…NPKH), 673-706 (ANGY…QPDF), 707-740 (RSAL…YPDH), 742-775 (KGLI…DPSN), and 776-809 (VQGK…APHE). Asn-499 carries an N-linked (GlcNAc...) asparagine glycan. Phosphotyrosine is present on Tyr-508. N-linked (GlcNAc...) asparagine glycosylation occurs at Asn-546. A disordered region spans residues 829–897 (VEQPLAPADK…APHKTTKDIK (69 aa)). Over residues 840–858 (PGTEEREEIPSEDVKEISS) the composition is skewed to basic and acidic residues. Positions 867–880 (KTNNNRNSKSNKQS) are enriched in low complexity. The span at 887 to 897 (DAPHKTTKDIK) shows a compositional bias: basic and acidic residues.

The protein belongs to the TMTC family.

It is found in the membrane. It localises to the endoplasmic reticulum. It catalyses the reaction a di-trans,poly-cis-dolichyl beta-D-mannosyl phosphate + L-seryl-[protein] = 3-O-(alpha-D-mannosyl)-L-seryl-[protein] + a di-trans,poly-cis-dolichyl phosphate + H(+). The enzyme catalyses a di-trans,poly-cis-dolichyl beta-D-mannosyl phosphate + L-threonyl-[protein] = 3-O-(alpha-D-mannosyl)-L-threonyl-[protein] + a di-trans,poly-cis-dolichyl phosphate + H(+). It participates in protein modification; protein glycosylation. Its function is as follows. Transfers mannosyl residues to the hydroxyl group of serine or threonine residues. The 4 members of the TMTC family are O-mannosyl-transferases dedicated primarily to the cadherin superfamily, each member seems to have a distinct role in decorating the cadherin domains with O-linked mannose glycans at specific regions. Also acts as O-mannosyl-transferase on other proteins such as PDIA3. Involved in the positive regulation of proteasomal protein degradation in the endoplasmic reticulum (ER), and the control of ER stress response. This is Protein O-mannosyl-transferase TMTC3 from Mus musculus (Mouse).